We begin with the raw amino-acid sequence, 417 residues long: GTP-binding protein YPT11 (417 aa).

The tract at residues 1–34 (MSQRKRYSLNVVTSPSIPSPTPSAPIRTNESNWE) is disordered. Residues 97–104 (GDANVGKT), 228–232 (DTAGQ), and 292–295 (NKID) contribute to the GTP site. 2 S-geranylgeranyl cysteine lipidation sites follow: cysteine 415 and cysteine 416.

This sequence belongs to the small GTPase superfamily. Rab family. As to quaternary structure, interacts with MYO2 (via C-terminal tail domain). Interacts with YIF1, YIP3, YIP4 and YIP5.

The protein resides in the endoplasmic reticulum membrane. The protein localises to the bud tip. It is found in the bud neck. Involved in the positive control of both endoplasmic reticulum (ER) and mitochondrion inheritance during cell divison. Required for the MYO2-dependent retention of newly inherited mitochondria at the bud tip in developing daughter cells. The protein is GTP-binding protein YPT11 (YPT11) of Saccharomyces cerevisiae (strain AWRI1631) (Baker's yeast).